The following is a 453-amino-acid chain: Trigger factor (453 aa).

The region spanning 171–256 (GDRVTINFKG…ATSIEAPQDI (86 aa)) is the PPIase FKBP-type domain.

The protein belongs to the FKBP-type PPIase family. Tig subfamily.

Its subcellular location is the cytoplasm. The enzyme catalyses [protein]-peptidylproline (omega=180) = [protein]-peptidylproline (omega=0). Involved in protein export. Acts as a chaperone by maintaining the newly synthesized protein in an open conformation. Functions as a peptidyl-prolyl cis-trans isomerase. The chain is Trigger factor from Bradyrhizobium diazoefficiens (strain JCM 10833 / BCRC 13528 / IAM 13628 / NBRC 14792 / USDA 110).